A 341-amino-acid polypeptide reads, in one-letter code: Elongation factor G (341 aa).

It belongs to the GTP-binding elongation factor family. EF-G/EF-2 subfamily.

The protein resides in the cytoplasm. Functionally, catalyzes the GTP-dependent ribosomal translocation step during translation elongation. During this step, the ribosome changes from the pre-translocational (PRE) to the post-translocational (POST) state as the newly formed A-site-bound peptidyl-tRNA and P-site-bound deacylated tRNA move to the P and E sites, respectively. Catalyzes the coordinated movement of the two tRNA molecules, the mRNA and conformational changes in the ribosome. The polypeptide is Elongation factor G (fus) (Streptomyces ramocissimus).